The chain runs to 92 residues: Regakine-1 (92 aa).

An N-terminal signal peptide occupies residues 1–21 (MRVSLAALAFLLTLAVLHSEA). 2 cysteine pairs are disulfide-bonded: Cys-32–Cys-56 and Cys-33–Cys-72.

Belongs to the intercrine beta (chemokine CC) family. Plasma serum.

The protein localises to the secreted. Its function is as follows. Chemotactic activity for neutrophils and lymphocytes. Binds to heparin. This chain is Regakine-1, found in Bos taurus (Bovine).